The primary structure comprises 107 residues: Large ribosomal subunit protein uL24 (107 aa).

The protein belongs to the universal ribosomal protein uL24 family. Part of the 50S ribosomal subunit.

One of two assembly initiator proteins, it binds directly to the 5'-end of the 23S rRNA, where it nucleates assembly of the 50S subunit. Its function is as follows. One of the proteins that surrounds the polypeptide exit tunnel on the outside of the subunit. This is Large ribosomal subunit protein uL24 from Solidesulfovibrio magneticus (strain ATCC 700980 / DSM 13731 / RS-1) (Desulfovibrio magneticus).